The sequence spans 717 residues: Ribosomal RNA large subunit methyltransferase K/L (717 aa).

The region spanning D44–L155 is the THUMP domain.

This sequence belongs to the methyltransferase superfamily. RlmKL family.

The protein resides in the cytoplasm. It carries out the reaction guanosine(2445) in 23S rRNA + S-adenosyl-L-methionine = N(2)-methylguanosine(2445) in 23S rRNA + S-adenosyl-L-homocysteine + H(+). It catalyses the reaction guanosine(2069) in 23S rRNA + S-adenosyl-L-methionine = N(2)-methylguanosine(2069) in 23S rRNA + S-adenosyl-L-homocysteine + H(+). Specifically methylates the guanine in position 2445 (m2G2445) and the guanine in position 2069 (m7G2069) of 23S rRNA. The polypeptide is Ribosomal RNA large subunit methyltransferase K/L (Francisella tularensis subsp. tularensis (strain SCHU S4 / Schu 4)).